Consider the following 285-residue polypeptide: Seipin (285 aa).

Residues 1 to 16 (MKINVSRPLQFLQWSS) lie on the Cytoplasmic side of the membrane. The helical transmembrane segment at 17 to 37 (YIVVAFLIQLLIILPLSILIY) threads the bilayer. The Lumenal segment spans residues 38 to 244 (HDFYLRLLPA…GLRNLMLRKR (207 aa)). Residues 245–265 (FLSYIIGISIFHCIICVLFFI) form a helical membrane-spanning segment. The Cytoplasmic portion of the chain corresponds to 266-285 (TGCTAFIFVRKGQEKSKKHS).

Belongs to the seipin family.

Its subcellular location is the endoplasmic reticulum membrane. Involved in lipid metabolism and lipid droplet (LD) morphology, number, and size. Facilitates initiation of LD formation, and ensures that vectorial budding of LDs from the ER is directed towards the cytoplasm. This is Seipin from Saccharomyces cerevisiae (strain ATCC 204508 / S288c) (Baker's yeast).